The primary structure comprises 272 residues: Formamidopyrimidine-DNA glycosylase (272 aa).

P2 acts as the Schiff-base intermediate with DNA in catalysis. E3 serves as the catalytic Proton donor. The active-site Proton donor; for beta-elimination activity is the K58. Residues H92, R111, and R153 each coordinate DNA. The FPG-type zinc finger occupies A238–R272. Catalysis depends on R262, which acts as the Proton donor; for delta-elimination activity.

It belongs to the FPG family. Monomer. Zn(2+) is required as a cofactor.

The catalysed reaction is Hydrolysis of DNA containing ring-opened 7-methylguanine residues, releasing 2,6-diamino-4-hydroxy-5-(N-methyl)formamidopyrimidine.. It carries out the reaction 2'-deoxyribonucleotide-(2'-deoxyribose 5'-phosphate)-2'-deoxyribonucleotide-DNA = a 3'-end 2'-deoxyribonucleotide-(2,3-dehydro-2,3-deoxyribose 5'-phosphate)-DNA + a 5'-end 5'-phospho-2'-deoxyribonucleoside-DNA + H(+). Involved in base excision repair of DNA damaged by oxidation or by mutagenic agents. Acts as a DNA glycosylase that recognizes and removes damaged bases. Has a preference for oxidized purines, such as 7,8-dihydro-8-oxoguanine (8-oxoG). Has AP (apurinic/apyrimidinic) lyase activity and introduces nicks in the DNA strand. Cleaves the DNA backbone by beta-delta elimination to generate a single-strand break at the site of the removed base with both 3'- and 5'-phosphates. This is Formamidopyrimidine-DNA glycosylase from Laribacter hongkongensis (strain HLHK9).